A 968-amino-acid polypeptide reads, in one-letter code: RNA polymerase-associated protein RapA (968 aa).

In terms of domain architecture, Helicase ATP-binding spans 164 to 334 (DVGRRHAPRV…FARLRLLDPN (171 aa)). Residue 177-184 (DEVGLGKT) coordinates ATP. The DEAH box motif lies at 280–283 (DEAH). Residues 490 to 685 (RVEWLMGYLT…ALKAQLEQGR (196 aa)) form the Helicase C-terminal domain.

This sequence belongs to the SNF2/RAD54 helicase family. RapA subfamily. As to quaternary structure, interacts with the RNAP. Has a higher affinity for the core RNAP than for the holoenzyme. Its ATPase activity is stimulated by binding to RNAP.

Functionally, transcription regulator that activates transcription by stimulating RNA polymerase (RNAP) recycling in case of stress conditions such as supercoiled DNA or high salt concentrations. Probably acts by releasing the RNAP, when it is trapped or immobilized on tightly supercoiled DNA. Does not activate transcription on linear DNA. Probably not involved in DNA repair. This is RNA polymerase-associated protein RapA from Salmonella schwarzengrund (strain CVM19633).